A 1483-amino-acid chain; its full sequence is Chromosome partition protein MukB (1483 aa).

34 to 41 lines the ATP pocket; it reads GGNGAGKS. Coiled coils occupy residues 311–426 and 547–607; these read EMAR…LQRA and GQQV…WLAA. A flexible hinge region spans residues 666-783; it reads PGGSEDARLN…KVPLFGRAAR (118 aa). 2 coiled-coil regions span residues 835-1115 and 1206-1266; these read EAAL…SAKA and DDPV…QAVS. A disordered region spans residues 850–870; sequence RELNNHESENQQQRQQYEQAK.

Belongs to the SMC family. MukB subfamily. In terms of assembly, homodimerization via its hinge domain. Binds to DNA via its C-terminal region. Interacts, and probably forms a ternary complex, with MukE and MukF via its C-terminal region. The complex formation is stimulated by calcium or magnesium. Interacts with tubulin-related protein FtsZ.

It localises to the cytoplasm. It is found in the nucleoid. Plays a central role in chromosome condensation, segregation and cell cycle progression. Functions as a homodimer, which is essential for chromosome partition. Involved in negative DNA supercoiling in vivo, and by this means organize and compact chromosomes. May achieve or facilitate chromosome segregation by condensation DNA from both sides of a centrally located replisome during cell division. This Erwinia tasmaniensis (strain DSM 17950 / CFBP 7177 / CIP 109463 / NCPPB 4357 / Et1/99) protein is Chromosome partition protein MukB.